We begin with the raw amino-acid sequence, 335 residues long: Homeobox protein DBX1 (335 aa).

Disordered regions lie at residues 56–102 and 240–335; these read RSIP…LSPA and KERE…ITVS. The segment covering 83–95 has biased composition (low complexity); it reads GSPGSGSRRGSSP. The segment at residues 181 to 240 is a DNA-binding region (homeobox); that stretch reads GMLRRAVFSDVQRKALEKTFQKQKYISKPDRKKLASKLGLKDSQVKIWFQNRRMKWRNSK. A compositionally biased stretch (low complexity) spans 299 to 317; it reads GPLPASPAHSSSPGKPSDF. A compositionally biased stretch (acidic residues) spans 318–335; the sequence is SDSDEDEEGEEDEEITVS.

The protein belongs to the H2.0 homeobox family.

It is found in the nucleus. Functionally, could have a role in patterning the central nervous system during embryogenesis. Has a key role in regulating the distinct phenotypic features that distinguish two major classes of ventral interneurons, V0 and V1 neurons. Regulates the transcription factor profile, neurotransmitter phenotype, intraspinal migratory path and axonal trajectory of V0 neurons, features that differentiate them from an adjacent set of V1 neurons. The chain is Homeobox protein DBX1 (Dbx1) from Rattus norvegicus (Rat).